A 456-amino-acid polypeptide reads, in one-letter code: Proline--tRNA ligase (456 aa).

It belongs to the class-II aminoacyl-tRNA synthetase family. ProS type 3 subfamily. In terms of assembly, homodimer.

It localises to the cytoplasm. It catalyses the reaction tRNA(Pro) + L-proline + ATP = L-prolyl-tRNA(Pro) + AMP + diphosphate. Its function is as follows. Catalyzes the attachment of proline to tRNA(Pro) in a two-step reaction: proline is first activated by ATP to form Pro-AMP and then transferred to the acceptor end of tRNA(Pro). The sequence is that of Proline--tRNA ligase from Methanococcus aeolicus (strain ATCC BAA-1280 / DSM 17508 / OCM 812 / Nankai-3).